The following is a 277-amino-acid chain: Orotidine 5'-phosphate decarboxylase (277 aa).

Substrate-binding positions include Asp40, 62-64 (KTH), 93-102 (DRKFIDIGNT), Tyr229, and Arg247. The active-site Proton donor is the Lys95.

It belongs to the OMP decarboxylase family.

It carries out the reaction orotidine 5'-phosphate + H(+) = UMP + CO2. Its pathway is pyrimidine metabolism; UMP biosynthesis via de novo pathway; UMP from orotate: step 2/2. This chain is Orotidine 5'-phosphate decarboxylase (pyrG), found in Aspergillus kawachii (White koji mold).